A 191-amino-acid chain; its full sequence is Chorion class B protein Ld34 (191 aa).

The N-terminal stretch at 1–21 (MSAKIILVFCAQALFVQSALS) is a signal peptide.

This sequence belongs to the chorion protein family.

Its function is as follows. This protein is one of many from the eggshell of the gypsy moth. This is Chorion class B protein Ld34 from Lymantria dispar (Gypsy moth).